The primary structure comprises 232 residues: Uracil-DNA glycosylase (232 aa).

Asp64 (proton acceptor) is an active-site residue.

It belongs to the uracil-DNA glycosylase (UDG) superfamily. UNG family.

The protein resides in the cytoplasm. It catalyses the reaction Hydrolyzes single-stranded DNA or mismatched double-stranded DNA and polynucleotides, releasing free uracil.. In terms of biological role, excises uracil residues from the DNA which can arise as a result of misincorporation of dUMP residues by DNA polymerase or due to deamination of cytosine. This chain is Uracil-DNA glycosylase, found in Shouchella clausii (strain KSM-K16) (Alkalihalobacillus clausii).